The chain runs to 266 residues: MESEGPPESESSEFFSQQEEENEEEEAQEPEETGPKNPLLQPALTGDVEGLQKIFEDPENPHHEQAMQLLLEEDIVGRNLLYAACMAGQSDVIRALAKYGVNLNEKTTRGYTLLHCAAAWGRLETLKALVELDVDIEALNFREERARDVAARYSQTECVEFLDWADARLTLKKYIAKVSLAVTDTEKGSGKLLKEDKNTILSACRAKNEWLETHTEASINELFEQRQQLEDIVTPIFTKMTTPCQVKSAKSVTSHDQKRSQDDTSN.

Composition is skewed to acidic residues over residues 1–11 and 18–32; these read MESEGPPESES and QEEE…EPEE. The interval 1–43 is disordered; sequence MESEGPPESESSEFFSQQEEENEEEEAQEPEETGPKNPLLQPA. 2 ANK repeats span residues 76–105 and 109–138; these read VGRN…NLNE and RGYT…DIEA.

The protein localises to the cytoplasm. It is found in the midbody. Its subcellular location is the midbody ring. It localises to the cleavage furrow. May play a role during cell division. The polypeptide is Ankyrin repeat domain-containing protein 45 (Homo sapiens (Human)).